The following is a 420-amino-acid chain: Deoxyribodipyrimidine photo-lyase (420 aa).

The 123-residue stretch at 2–124 (GPLLVWHRGD…PLHLLPAPHL (123 aa)) folds into the Photolyase/cryptochrome alpha/beta domain. A disordered region spans residues 147–176 (APPLPPPEALPKGPEEGEIPREDPGLPLPE). Basic and acidic residues predominate over residues 159 to 170 (GPEEGEIPREDP). Tyr-197 provides a ligand contact to FAD. Arg-201 serves as a coordination point for DNA. Residues 209 to 213 (GSRLS), Trp-241, Arg-248, Asn-310, and 341 to 343 (DGD) each bind FAD. Interaction with DNA regions lie at residues 244–251 (ELLWRDFS) and 310–311 (NR). Residue Gln-373 participates in DNA binding.

Belongs to the DNA photolyase class-1 family. As to quaternary structure, monomer. FAD serves as cofactor.

The enzyme catalyses cyclobutadipyrimidine (in DNA) = 2 pyrimidine residues (in DNA).. Its function is as follows. Involved in repair of UV radiation-induced DNA damage. Catalyzes the light-dependent monomerization (300-600 nm) of cyclobutyl pyrimidine dimers (in cis-syn configuration), which are formed between adjacent bases on the same DNA strand upon exposure to ultraviolet radiation. The polypeptide is Deoxyribodipyrimidine photo-lyase (phr) (Thermus thermophilus (strain ATCC 27634 / DSM 579 / HB8)).